We begin with the raw amino-acid sequence, 602 residues long: Histone-arginine methyltransferase CARM1 (602 aa).

The SAM-dependent MTase PRMT-type domain maps to Ala-117–Val-424. Gln-130, Arg-139, Gly-163, Glu-185, Glu-214, and Ser-242 together coordinate S-adenosyl-L-methionine. The segment at Thr-470 to Ser-602 is transactivation domain.

This sequence belongs to the class I-like SAM-binding methyltransferase superfamily. Protein arginine N-methyltransferase family. As to quaternary structure, homodimer.

Its subcellular location is the nucleus. It localises to the cytoplasm. The protein resides in the chromosome. The enzyme catalyses L-arginyl-[protein] + 2 S-adenosyl-L-methionine = N(omega),N(omega)-dimethyl-L-arginyl-[protein] + 2 S-adenosyl-L-homocysteine + 2 H(+). Methylates (mono- and asymmetric dimethylation) the guanidino nitrogens of arginyl residues in several proteins involved in DNA packaging, transcription regulation, pre-mRNA splicing, and mRNA stability. Recruited to promoters upon gene activation together with histone acetyltransferases from EP300/P300 and p160 families, methylates histone H3 at 'Arg-17' (H3R17me) and activates transcription via chromatin remodeling. The sequence is that of Histone-arginine methyltransferase CARM1 (carm1) from Xenopus laevis (African clawed frog).